We begin with the raw amino-acid sequence, 198 residues long: Sorcin (198 aa).

EF-hand domains follow at residues 45–64 (QDGQ…SGIA), 70–98 (FNLE…FKEL), 100–135 (AVLN…MGFR), and 151–169 (SGKI…LRAL). Ca(2+) is bound by residues Asp-83, Asp-85, Ser-87, Thr-89, Glu-94, Asp-113, Asp-115, Ser-117, Thr-119, and Glu-124. Position 178 is a phosphoserine (Ser-178).

Homodimer. Interacts with GCA, RYR2 and ANXA7. In terms of tissue distribution, detected in cardiac myocytes.

It is found in the cytoplasm. The protein resides in the sarcoplasmic reticulum membrane. Calcium-binding protein that modulates excitation-contraction coupling in the heart. Contributes to calcium homeostasis in the heart sarcoplasmic reticulum. Modulates the activity of RYR2 calcium channels. This chain is Sorcin (Sri), found in Mus musculus (Mouse).